Consider the following 404-residue polypeptide: UBP1-associated protein 2C (404 aa).

The disordered stretch occupies residues 1 to 29; sequence MDMMKKRKLDENGNGLNTNGGGTIGPTRL. RRM domains lie at 75–152 and 167–248; these read RKLF…LAAS and RKIY…GKKG. Disordered regions lie at residues 246–270 and 344–404; these read KKGGKPGMPQAQDGGSGHGHVHGEG and GSGQ…PPNY.

Expressed in root apical and lateral meristems, young leaves and embryos.

The protein localises to the nucleus. Functionally, heterogeneous nuclear ribonucleoprotein (hnRNP)-like protein that acts as a component of a complex regulating the turnover of mRNAs in the nucleus. Binds with high affinity to RNA molecules that contain U-rich sequences in 3'-UTRs. May function in complex with UBP1 and contribute to the stabilization of mRNAs in the nucleus. This chain is UBP1-associated protein 2C (UBA2C), found in Arabidopsis thaliana (Mouse-ear cress).